We begin with the raw amino-acid sequence, 122 residues long: Riboflavin kinase (122 aa).

4 to 9 (GFGEGA) is a CDP binding site. Mg(2+) contacts are provided by threonine 33 and asparagine 35. 2 residues coordinate FMN: threonine 84 and glutamate 92. 97–100 (VNLR) contacts CDP.

It belongs to the archaeal riboflavin kinase family. Mg(2+) is required as a cofactor.

The enzyme catalyses riboflavin + CTP = CDP + FMN + H(+). Its pathway is cofactor biosynthesis; FMN biosynthesis; FMN from riboflavin (CTP route): step 1/1. Its function is as follows. Catalyzes the CTP-dependent phosphorylation of riboflavin (vitamin B2) to form flavin mononucleotide (FMN). In Methanothermobacter thermautotrophicus (strain ATCC 29096 / DSM 1053 / JCM 10044 / NBRC 100330 / Delta H) (Methanobacterium thermoautotrophicum), this protein is Riboflavin kinase.